The sequence spans 919 residues: Valine--tRNA ligase (919 aa).

Residues 66 to 76 carry the 'HIGH' region motif; the sequence is PNVTGQLHMGH. Positions 562–566 match the 'KMSKS' region motif; it reads KMSKS. Residue lysine 565 coordinates ATP. The stretch at 852–919 forms a coiled coil; that stretch reads TVDKEAERKR…RISARLEELK (68 aa).

It belongs to the class-I aminoacyl-tRNA synthetase family. ValS type 1 subfamily. Monomer.

The protein resides in the cytoplasm. The enzyme catalyses tRNA(Val) + L-valine + ATP = L-valyl-tRNA(Val) + AMP + diphosphate. Catalyzes the attachment of valine to tRNA(Val). As ValRS can inadvertently accommodate and process structurally similar amino acids such as threonine, to avoid such errors, it has a 'posttransfer' editing activity that hydrolyzes mischarged Thr-tRNA(Val) in a tRNA-dependent manner. This is Valine--tRNA ligase from Corynebacterium diphtheriae (strain ATCC 700971 / NCTC 13129 / Biotype gravis).